A 248-amino-acid polypeptide reads, in one-letter code: Biosynthetic peptidoglycan transglycosylase (248 aa).

A helical transmembrane segment spans residues 17–37 (LLIFFFASTILAVIVYRFMPV).

Belongs to the glycosyltransferase 51 family.

It is found in the cell inner membrane. The enzyme catalyses [GlcNAc-(1-&gt;4)-Mur2Ac(oyl-L-Ala-gamma-D-Glu-L-Lys-D-Ala-D-Ala)](n)-di-trans,octa-cis-undecaprenyl diphosphate + beta-D-GlcNAc-(1-&gt;4)-Mur2Ac(oyl-L-Ala-gamma-D-Glu-L-Lys-D-Ala-D-Ala)-di-trans,octa-cis-undecaprenyl diphosphate = [GlcNAc-(1-&gt;4)-Mur2Ac(oyl-L-Ala-gamma-D-Glu-L-Lys-D-Ala-D-Ala)](n+1)-di-trans,octa-cis-undecaprenyl diphosphate + di-trans,octa-cis-undecaprenyl diphosphate + H(+). Its pathway is cell wall biogenesis; peptidoglycan biosynthesis. Peptidoglycan polymerase that catalyzes glycan chain elongation from lipid-linked precursors. This chain is Biosynthetic peptidoglycan transglycosylase, found in Bacteroides thetaiotaomicron (strain ATCC 29148 / DSM 2079 / JCM 5827 / CCUG 10774 / NCTC 10582 / VPI-5482 / E50).